We begin with the raw amino-acid sequence, 397 residues long: Iripin-2 (397 aa).

An N-terminal signal peptide occupies residues 1 to 21 (MEDFKMKTLAAFLSLLVLCWA). N-linked (GlcNAc...) asparagine glycans are attached at residues asparagine 109 and asparagine 270.

The protein belongs to the serpin family. In terms of assembly, interacts with mouse MCPT4. Female salivary gland. Ovary. Midgut.

It localises to the secreted. Its function is as follows. Serine protease inhibitor that modulates blood feeding of ticks on vertebrate species. Inhibits host trypsin, thrombin (F2), alpha-chymotrypsin, cathepsin G (CTSG) and mast cell chymase (CMA1). Inhibits host cathepsin G- and thrombin-induced platelet aggregation. Inhibits acute inflammation in the host. Suppresses neutrophil recruitment in inflamed area. Does not inhibit host plasmin (PLG), factor Xa (F10), factor XIa (F11), elastase and proteinase 3/myeloblastin (PRTN3). In terms of biological role, (Microbial infection) Inhibits IL6 production by mouse splenic dendritic cells in response to Borrelia burgdorferi exposure. Decreases levels of STAT3 phosphorylation in mouse splenic dendritic cells in response to Borrelia burgdorferi exposure and in Borrelia-primed CD4+ T-lymphocytes. Inhibits differentiation of mouse Th17 cells, a subset of CD4+ T-lymphocytes that play a crucial role in protection against extracellular bacteria, in response to Borrelia burgdorferi exposure via inhibition of the IL6/STAT3 signaling pathway. The polypeptide is Iripin-2 (Ixodes ricinus (Common tick)).